Consider the following 765-residue polypeptide: Phosphoribosylformylglycinamidine synthase subunit PurL (765 aa).

The active site involves histidine 57. Residues tyrosine 60 and arginine 104 each coordinate ATP. A Mg(2+)-binding site is contributed by glutamate 106. Substrate is bound by residues 107–110 (SHNH) and arginine 129. Catalysis depends on histidine 108, which acts as the Proton acceptor. Aspartate 130 is a binding site for Mg(2+). Glutamine 254 lines the substrate pocket. Aspartate 282 contributes to the Mg(2+) binding site. 326–328 (ESQ) is a binding site for substrate. Residues asparagine 508 and glycine 545 each coordinate ATP. Residue asparagine 546 coordinates Mg(2+). Residue serine 548 coordinates substrate.

The protein belongs to the FGAMS family. As to quaternary structure, monomer. Part of the FGAM synthase complex composed of 1 PurL, 1 PurQ and 2 PurS subunits.

The protein localises to the cytoplasm. The enzyme catalyses N(2)-formyl-N(1)-(5-phospho-beta-D-ribosyl)glycinamide + L-glutamine + ATP + H2O = 2-formamido-N(1)-(5-O-phospho-beta-D-ribosyl)acetamidine + L-glutamate + ADP + phosphate + H(+). Its pathway is purine metabolism; IMP biosynthesis via de novo pathway; 5-amino-1-(5-phospho-D-ribosyl)imidazole from N(2)-formyl-N(1)-(5-phospho-D-ribosyl)glycinamide: step 1/2. Part of the phosphoribosylformylglycinamidine synthase complex involved in the purines biosynthetic pathway. Catalyzes the ATP-dependent conversion of formylglycinamide ribonucleotide (FGAR) and glutamine to yield formylglycinamidine ribonucleotide (FGAM) and glutamate. The FGAM synthase complex is composed of three subunits. PurQ produces an ammonia molecule by converting glutamine to glutamate. PurL transfers the ammonia molecule to FGAR to form FGAM in an ATP-dependent manner. PurS interacts with PurQ and PurL and is thought to assist in the transfer of the ammonia molecule from PurQ to PurL. This is Phosphoribosylformylglycinamidine synthase subunit PurL from Corynebacterium aurimucosum (strain ATCC 700975 / DSM 44827 / CIP 107346 / CN-1) (Corynebacterium nigricans).